The primary structure comprises 308 residues: Ribosomal RNA small subunit methyltransferase H (308 aa).

Residues 36-38 (GGH), D55, F82, D103, and Q110 contribute to the S-adenosyl-L-methionine site.

This sequence belongs to the methyltransferase superfamily. RsmH family.

It is found in the cytoplasm. The enzyme catalyses cytidine(1402) in 16S rRNA + S-adenosyl-L-methionine = N(4)-methylcytidine(1402) in 16S rRNA + S-adenosyl-L-homocysteine + H(+). In terms of biological role, specifically methylates the N4 position of cytidine in position 1402 (C1402) of 16S rRNA. The chain is Ribosomal RNA small subunit methyltransferase H from Helicobacter pylori (strain ATCC 700392 / 26695) (Campylobacter pylori).